Reading from the N-terminus, the 132-residue chain is Fatty acid-binding protein type 3 (132 aa).

The protein belongs to the calycin superfamily. Fatty-acid binding protein (FABP) family.

This is Fatty acid-binding protein type 3 from Fasciola hepatica (Liver fluke).